The chain runs to 267 residues: Probable ribosomal RNA small subunit methyltransferase A (267 aa).

Positions 12, 37, 58, 83, and 100 each coordinate S-adenosyl-L-methionine.

The protein belongs to the class I-like SAM-binding methyltransferase superfamily. rRNA adenine N(6)-methyltransferase family. RsmA subfamily.

It is found in the cytoplasm. In terms of biological role, specifically dimethylates two adjacent adenosines in the loop of a conserved hairpin near the 3'-end of 16S rRNA in the 30S particle. May play a critical role in biogenesis of 30S subunits. The sequence is that of Probable ribosomal RNA small subunit methyltransferase A from Methanococcus vannielii (strain ATCC 35089 / DSM 1224 / JCM 13029 / OCM 148 / SB).